The primary structure comprises 1096 residues: cAMP/cGMP-dependent 3',5'-cAMP/cGMP phosphodiesterase B (1096 aa).

Positions 216 to 248 (SSSKMIINDSPRTQQRNGTTEQQKKQQQQQYLQ) are disordered. Residues 225 to 236 (SPRTQQRNGTTE) are compositionally biased toward polar residues. Residues His-573, His-575, and Asp-577 each coordinate a divalent metal cation. Residues 783–930 (VFSK…DLSH) and 946–1070 (ITQH…EDNI) each bind a nucleoside 3',5'-cyclic phosphate.

The protein belongs to the metallo-beta-lactamase superfamily. cNMP phosphodiesterase family. Requires Mn(2+) as cofactor. It depends on Mg(2+) as a cofactor. Zn(2+) serves as cofactor.

The protein localises to the cytoplasm. It localises to the cytosol. It catalyses the reaction 3',5'-cyclic AMP + H2O = AMP + H(+). The catalysed reaction is 3',5'-cyclic GMP + H2O = GMP + H(+). Its function is as follows. Dual specificity cAMP and cGMP phosphodiesterase with marked preference for cyclic AMP, which is activated by cAMP and cGMP. Likely functions as a cAMP-stimulated cAMP-phosphodiesterase which may play a role in regulating the cAMP relay response. This Dictyostelium discoideum (Social amoeba) protein is cAMP/cGMP-dependent 3',5'-cAMP/cGMP phosphodiesterase B (pdeE).